The chain runs to 231 residues: Ribonuclease HII (231 aa).

Residues 32 to 223 (WPVAGMDEAG…FRLGGTEVVE (192 aa)) form the RNase H type-2 domain. The a divalent metal cation site is built by aspartate 38, glutamate 39, and aspartate 130.

It belongs to the RNase HII family. The cofactor is Mn(2+). Requires Mg(2+) as cofactor.

The protein resides in the cytoplasm. The catalysed reaction is Endonucleolytic cleavage to 5'-phosphomonoester.. Its function is as follows. Endonuclease that specifically degrades the RNA of RNA-DNA hybrids. This Mesorhizobium japonicum (strain LMG 29417 / CECT 9101 / MAFF 303099) (Mesorhizobium loti (strain MAFF 303099)) protein is Ribonuclease HII.